The sequence spans 852 residues: Disks large homolog 2 (852 aa).

S-palmitoyl cysteine attachment occurs at residues cysteine 5 and cysteine 7. A Phosphoserine modification is found at serine 28. Tyrosine 58 is subject to Phosphotyrosine. Serine 65 bears the Phosphoserine mark. PDZ domains are found at residues 98–185 (EITL…RRRR) and 193–280 (EIKL…GKPT). Phosphoserine is present on residues serine 307, serine 328, serine 360, serine 365, serine 406, and serine 414. The 82-residue stretch at 421-502 (KVVLHKGSTG…TVTIIAQYQP (82 aa)) folds into the PDZ 3 domain. Tyrosine 505 carries the post-translational modification Phosphotyrosine. Residues serine 528, serine 530, and serine 553 each carry the phosphoserine modification. One can recognise an SH3 domain in the interval 536–606 (KRSLYVRAMF…PSKRRVERKE (71 aa)). The Guanylate kinase-like domain maps to 662–837 (TRPVIILGPM…IYNQCKLVIE (176 aa)). Residues tyrosine 732 and tyrosine 737 each carry the phosphotyrosine modification.

In terms of assembly, interacts with NOS1/nNOS through second PDZ domain. Interacts with KCNJ2/Kir2.1 (via C-terminus) through one of its PDZ domains. Interacts with KCNJ4. Interacts with FRMPD4 (via C-terminus). Interacts through its PDZ domains with NETO1. Interacts with LRFN1, LRFN2 and LRFN4. Interacts with FASLG. Interacts with KCNJ4. Interacts with ADAM22. Interacts with DGKI (via PDZ-binding motif). Palmitoylation of isoform 1 and isoform 2 is not required for targeting to postsynaptic density. As to expression, brain. Highest levels of isoform 1 in cortex, olfactory bulb, thalamus, hypothalamus, striatum and hippocampus. Highest level of isoform 2 in olfactory bulb. Reduced levels in cortex and hippocampus. Highest level of isoform 4 in spinal cord. Low levels of isoform 4, isoform 6, and isoform 7 in superior cervical ganglion.

The protein resides in the cell membrane. It localises to the postsynaptic density. Its subcellular location is the synapse. The protein localises to the membrane. It is found in the cell projection. The protein resides in the axon. It localises to the perikaryon. Functionally, required for perception of chronic pain through NMDA receptor signaling. Regulates surface expression of NMDA receptors in dorsal horn neurons of the spinal cord. Interacts with the cytoplasmic tail of NMDA receptor subunits as well as inward rectifying potassium channels. Involved in regulation of synaptic stability at cholinergic synapses. Part of the postsynaptic protein scaffold of excitatory synapses. The polypeptide is Disks large homolog 2 (Dlg2) (Mus musculus (Mouse)).